We begin with the raw amino-acid sequence, 167 residues long: Urease accessory protein UreE (167 aa).

This sequence belongs to the UreE family.

Its subcellular location is the cytoplasm. Functionally, involved in urease metallocenter assembly. Binds nickel. Probably functions as a nickel donor during metallocenter assembly. The polypeptide is Urease accessory protein UreE (Pseudomonas paraeruginosa (strain DSM 24068 / PA7) (Pseudomonas aeruginosa (strain PA7))).